A 393-amino-acid polypeptide reads, in one-letter code: Stearoyl-[acyl-carrier-protein] 9-desaturase, chloroplastic (393 aa).

The transit peptide at 1–30 (MALNFNSPTFQSIKTTRRPCSPLRSPRVFM) directs the protein to the chloroplast. 6 residues coordinate Fe cation: glutamate 135, glutamate 173, histidine 176, glutamate 226, glutamate 259, and histidine 262.

Belongs to the fatty acid desaturase type 2 family. Homodimer. The cofactor is Fe(2+).

The protein resides in the plastid. The protein localises to the chloroplast. It carries out the reaction octadecanoyl-[ACP] + 2 reduced [2Fe-2S]-[ferredoxin] + O2 + 2 H(+) = (9Z)-octadecenoyl-[ACP] + 2 oxidized [2Fe-2S]-[ferredoxin] + 2 H2O. Its pathway is lipid metabolism; fatty acid metabolism. In terms of biological role, converts stearoyl-ACP to oleoyl-ACP by introduction of a cis double bond between carbons 9 and 10 of the acyl chain. This Solanum commersonii (Commerson's wild potato) protein is Stearoyl-[acyl-carrier-protein] 9-desaturase, chloroplastic.